Reading from the N-terminus, the 404-residue chain is Putative Peroxidase 48 (404 aa).

The signal sequence occupies residues 1-18 (MRFLGDYKFALLTCSVIA). Intrachain disulfides connect Cys-77-Cys-156, Cys-110-Cys-115, Cys-162-Cys-397, and Cys-241-Cys-273. His-108 functions as the Proton acceptor in the catalytic mechanism. Positions 109, 112, 114, 116, and 118 each coordinate Ca(2+). N-linked (GlcNAc...) asparagine glycosylation is present at Asn-136. Substrate is bound at residue Pro-204. His-234 contacts heme b. Ser-235 is a Ca(2+) binding site. An N-linked (GlcNAc...) asparagine glycan is attached at Asn-250. Positions 276–307 (SVSTSSPSAPPDIGLPPSLPASDSENSYGMSS) are disordered. Residues 283–294 (SAPPDIGLPPSL) are compositionally biased toward pro residues. Asp-287 contributes to the Ca(2+) binding site. Over residues 296 to 307 (ASDSENSYGMSS) the composition is skewed to polar residues.

This sequence belongs to the peroxidase family. Classical plant (class III) peroxidase subfamily. Requires heme b as cofactor. Ca(2+) serves as cofactor.

Its subcellular location is the secreted. It carries out the reaction 2 a phenolic donor + H2O2 = 2 a phenolic radical donor + 2 H2O. In terms of biological role, removal of H(2)O(2), oxidation of toxic reductants, biosynthesis and degradation of lignin, suberization, auxin catabolism, response to environmental stresses such as wounding, pathogen attack and oxidative stress. These functions might be dependent on each isozyme/isoform in each plant tissue. The chain is Putative Peroxidase 48 (PER48) from Arabidopsis thaliana (Mouse-ear cress).